We begin with the raw amino-acid sequence, 356 residues long: Inositol phosphoceramide mannosyltransferase 3 (356 aa).

The helical transmembrane segment at 4–24 (ILFYFFFFLTLILSATVYLFG) threads the bilayer. Residues N52 and N146 are each glycosylated (N-linked (GlcNAc...) asparagine). 2 consecutive transmembrane segments (helical) span residues 197–217 (FPYL…IWSA) and 269–289 (WAIF…FIFG). Residues S307, S353, and S355 each carry the phosphoserine modification.

Belongs to the glycosyltransferase 32 family.

The protein localises to the endoplasmic reticulum membrane. The protein resides in the golgi apparatus. It is found in the cis-Golgi network membrane. Its subcellular location is the trans-Golgi network membrane. Functionally, with imt1 and imt2, is required for the synthesis of mannosylinositol phosphoceramide (MIPC). Catalyzes the addition of mannosyl to inositol phosphoceramide (IPC). MIPC is essential for cell morphology, cell-surface distribution of ergosterol, localization for plasma-membrane transporters, and lipid-raft-mediated endocytosis of plasma membrane proteins to the vacuole. The polypeptide is Inositol phosphoceramide mannosyltransferase 3 (Schizosaccharomyces pombe (strain 972 / ATCC 24843) (Fission yeast)).